A 224-amino-acid polypeptide reads, in one-letter code: CRP-like cAMP-activated global transcriptional regulator (224 aa).

3',5'-cyclic AMP-binding positions include 64 to 70, 79 to 82, 89 to 90, 134 to 135, 142 to 143, and 178 to 188; these read GRENLLT, GELS, RT, TN, IF, and EEIAQLVGASR. The 74-residue stretch at 144 to 217 folds into the HTH crp-type domain; that stretch reads TDVPGRVAKQ…GKSVLISDSE (74 aa). The H-T-H motif DNA-binding region spans 177-196; the sequence is QEEIAQLVGASRETVNKALA.

Homodimer.

Global transcriptional regulator that complexes with cAMP and binds to specific DNA promoter sites, causing DNA-bending, to regulate transcription. cAMP improves binding to specific DNA sequences, probably by altering protein conformation. Activates expression of whiB1. The chain is CRP-like cAMP-activated global transcriptional regulator from Mycobacterium tuberculosis (strain CDC 1551 / Oshkosh).